Consider the following 346-residue polypeptide: Prepilin peptidase EppA (346 aa).

The next 10 helical transmembrane spans lie at 1 to 21, 31 to 51, 56 to 76, 77 to 97, 101 to 121, 128 to 148, 149 to 169, 182 to 202, 206 to 226, and 321 to 341; these read MFGFDNLILGVYLFNFLLILT, IIPHFVIILMLIVNLPIGYYF, AITSFFATLILCLILGVGMGG, GDVKMFTALSPLFAAETIYFV, ISILIGLSALFAAIFPMTKIL, IIPSSAYLAMLIGIIVSITEI, YSIGNTKTILWSYIILSIFIS, LGYITPIYLIGFYLLNPAYFV, VLISFFVYIGQLSLISLVIYA, and PFVPFVLVAYCVITLLNMGVI.

It belongs to the peptidase A24 family.

It is found in the cell membrane. In terms of biological role, peptidase that processes the N-terminus of prepilins. Specifically cleaves proteins with a class III (type IV pilin-like) signal sequence, such as the major structural pilin EpdE and the minor pilins EpdA, EpdC and EpdD. Is not able to cleave the preflagellin subunit FlaB2. This chain is Prepilin peptidase EppA, found in Methanococcus maripaludis (strain DSM 14266 / JCM 13030 / NBRC 101832 / S2 / LL).